Reading from the N-terminus, the 217-residue chain is Peptidyl-tRNA hydrolase (217 aa).

Y14 is a binding site for tRNA. Catalysis depends on H19, which acts as the Proton acceptor. TRNA-binding residues include Y64, N66, and N113. A disordered region spans residues 182–217 (MNRINAPPPKPKREQKRSSDAPDSSSDTNTSNASDG). A compositionally biased stretch (low complexity) spans 202-217 (APDSSSDTNTSNASDG).

This sequence belongs to the PTH family. As to quaternary structure, monomer.

It is found in the cytoplasm. It carries out the reaction an N-acyl-L-alpha-aminoacyl-tRNA + H2O = an N-acyl-L-amino acid + a tRNA + H(+). Hydrolyzes ribosome-free peptidyl-tRNAs (with 1 or more amino acids incorporated), which drop off the ribosome during protein synthesis, or as a result of ribosome stalling. Functionally, catalyzes the release of premature peptidyl moieties from peptidyl-tRNA molecules trapped in stalled 50S ribosomal subunits, and thus maintains levels of free tRNAs and 50S ribosomes. This is Peptidyl-tRNA hydrolase from Roseiflexus sp. (strain RS-1).